The primary structure comprises 98 residues: Large ribosomal subunit protein uL23 (98 aa).

The protein belongs to the universal ribosomal protein uL23 family. Part of the 50S ribosomal subunit. Contacts protein L29, and trigger factor when it is bound to the ribosome.

Its function is as follows. One of the early assembly proteins it binds 23S rRNA. One of the proteins that surrounds the polypeptide exit tunnel on the outside of the ribosome. Forms the main docking site for trigger factor binding to the ribosome. In Methylobacterium nodulans (strain LMG 21967 / CNCM I-2342 / ORS 2060), this protein is Large ribosomal subunit protein uL23.